We begin with the raw amino-acid sequence, 113 residues long: Iron-sulfur cluster insertion protein ErpA (113 aa).

Iron-sulfur cluster-binding residues include cysteine 41, cysteine 105, and cysteine 107.

The protein belongs to the HesB/IscA family. Homodimer. Iron-sulfur cluster is required as a cofactor.

In terms of biological role, required for insertion of 4Fe-4S clusters for at least IspG. The sequence is that of Iron-sulfur cluster insertion protein ErpA from Actinobacillus pleuropneumoniae serotype 7 (strain AP76).